A 336-amino-acid polypeptide reads, in one-letter code: Cell division protein ZipA (336 aa).

Topologically, residues 1-2 (ME) are periplasmic. Residues 3-23 (LHILFFILAGLLIAVLISFSL) traverse the membrane as a helical segment. The Cytoplasmic portion of the chain corresponds to 24-336 (WSARREKSRI…SRQSYLARVS (313 aa)). A disordered region spans residues 56–77 (PSLNPQSYAQTTGQHGETEADN). Polar residues predominate over residues 59-70 (NPQSYAQTTGQH).

The protein belongs to the ZipA family. In terms of assembly, interacts with FtsZ via their C-terminal domains.

Its subcellular location is the cell inner membrane. In terms of biological role, essential cell division protein that stabilizes the FtsZ protofilaments by cross-linking them and that serves as a cytoplasmic membrane anchor for the Z ring. Also required for the recruitment to the septal ring of downstream cell division proteins. This Actinobacillus pleuropneumoniae serotype 3 (strain JL03) protein is Cell division protein ZipA.